The sequence spans 327 residues: Serpentine receptor class alpha-12 (327 aa).

Residues 1–18 lie on the Extracellular side of the membrane; the sequence is MGCASEIQAEIFTSFGQL. Residues 19 to 39 traverse the membrane as a helical segment; the sequence is FYASFQTILFLATIIGSLLAI. Residues 40–53 lie on the Cytoplasmic side of the membrane; it reads FELCKKTTVPDSTR. A helical transmembrane segment spans residues 54 to 74; it reads VLLIGSLFFANAHEFAYFTAP. Over 75 to 98 the chain is Extracellular; sequence LKVFQLNIFNTNTSCYPLISTRDC. The chain crosses the membrane as a helical span at residues 99–119; that stretch reads IPTTTVLAMGISGNMLIQSAL. At 120-138 the chain is on the cytoplasmic side; that stretch reads SIDRLLATIFPFSYSRMRA. Residues 139-159 traverse the membrane as a helical segment; that stretch reads LPGFVLLIMVLIPAMFTYSWI. Over 160 to 185 the chain is Extracellular; sequence RLDIVLDDYQMFCSQWSANISTRANT. The chain crosses the membrane as a helical span at residues 186-206; it reads FLEICSYLTVAHIIINCLIIL. At 207–234 the chain is on the cytoplasmic side; that stretch reads RNRAIEKRCRFDVTQRYLTSENLKTTQA. A helical transmembrane segment spans residues 235–255; sequence ICYLSIAQFLAMFMYSGGVLL. Over 256–270 the chain is Extracellular; sequence MRKNRENIPTLIYFN. Residues 271–291 traverse the membrane as a helical segment; that stretch reads VIVWVYAPPYACVSLAPLILF. Residues 292-327 are Cytoplasmic-facing; sequence SLWNLKKQRHIQIKSVQSAQKETQDDYIRKLQKSWK.

The protein belongs to the nematode receptor-like protein sra family. As to expression, expressed in neurons RIF/RIG and PVT.

Its subcellular location is the membrane. This Caenorhabditis elegans protein is Serpentine receptor class alpha-12 (sra-12).